The following is a 103-amino-acid chain: Putative protein YmfH (103 aa).

A disordered region spans residues 1-34; sequence MVNAAQRTRVKVEADNRPSVDTHPPGVQPSPGTG. The segment covering 10–20 has biased composition (basic and acidic residues); it reads VKVEADNRPSV. A run of 2 helical transmembrane segments spans residues 42 to 62 and 73 to 93; these read MLCV…TALF and GLIT…CFVE.

The protein localises to the cell inner membrane. The chain is Putative protein YmfH (ymfH) from Escherichia coli (strain K12).